The sequence spans 253 residues: Imidazole glycerol phosphate synthase subunit HisF (253 aa).

Residues aspartate 11 and aspartate 130 contribute to the active site.

This sequence belongs to the HisA/HisF family. Heterodimer of HisH and HisF.

The protein resides in the cytoplasm. The enzyme catalyses 5-[(5-phospho-1-deoxy-D-ribulos-1-ylimino)methylamino]-1-(5-phospho-beta-D-ribosyl)imidazole-4-carboxamide + L-glutamine = D-erythro-1-(imidazol-4-yl)glycerol 3-phosphate + 5-amino-1-(5-phospho-beta-D-ribosyl)imidazole-4-carboxamide + L-glutamate + H(+). Its pathway is amino-acid biosynthesis; L-histidine biosynthesis; L-histidine from 5-phospho-alpha-D-ribose 1-diphosphate: step 5/9. Its function is as follows. IGPS catalyzes the conversion of PRFAR and glutamine to IGP, AICAR and glutamate. The HisF subunit catalyzes the cyclization activity that produces IGP and AICAR from PRFAR using the ammonia provided by the HisH subunit. The sequence is that of Imidazole glycerol phosphate synthase subunit HisF from Desulfitobacterium hafniense (strain DSM 10664 / DCB-2).